Consider the following 381-residue polypeptide: Guanine nucleotide-binding protein G(olf) subunit alpha (381 aa).

Residues 1–25 (MGCLGNSSKTAEDQGVDEKERREAN) form a disordered region. A lipid anchor (N-palmitoyl glycine) is attached at Gly-2. Cys-3 carries the S-palmitoyl cysteine lipid modification. Basic and acidic residues predominate over residues 10-25 (TAEDQGVDEKERREAN). The region spanning 41 to 381 (ATHRLLLLGA…RMHLKQYELL (341 aa)) is the G-alpha domain. Positions 44–57 (RLLLLGAGESGKST) are G1 motif. Positions 52, 53, 54, 55, 56, and 57 each coordinate GTP. Ser-56 is a binding site for Mg(2+). A Phosphothreonine modification is found at Thr-178. Positions 183-191 (DLLRCRVLT) are G2 motif. Residues Leu-185, Arg-186, and Thr-191 each contribute to the GTP site. Mg(2+) is bound by residues Thr-191 and Asp-210. Positions 206-215 (FHMFDVGGQR) are G3 motif. Positions 213, 279, 280, 282, and 353 each coordinate GTP. The segment at 275–282 (ILFLNKQD) is G4 motif. A G5 motif region spans residues 351 to 356 (TCAVDT).

It belongs to the G-alpha family. G(s) subfamily. G proteins are composed of 3 units; alpha, beta and gamma. The alpha chain contains the guanine nucleotide binding site. Interacts with GAS2L2. Interacts (GDP-bound form) with RIC8B (via C-terminus); promoting GNAL folding and association with the plasma membrane.

It is found in the cell membrane. The catalysed reaction is GTP + H2O = GDP + phosphate + H(+). Functionally, guanine nucleotide-binding protein (G protein) involved as transducer in olfactory signal transduction controlled by G protein-coupled receptors (GPCRs). Contains the guanine nucleotide binding site and alternates between an active, GTP-bound state and an inactive, GDP-bound state. Signaling by an activated GPCR promotes GDP release and GTP binding. The alpha subunit has a low GTPase activity that converts bound GTP to GDP, thereby terminating the signal. Both GDP release and GTP hydrolysis are modulated by numerous regulatory proteins. GNAL/G(olf) alpha specifically mediates olfactory signal transduction within the olfactory neuroepithelium and the basal ganglia following GPCRs activation. Acts by promoting the specific activation of adenylyl cyclase ADCY3, resulting in increased levels of the signaling molecule cAMP. The protein is Guanine nucleotide-binding protein G(olf) subunit alpha of Mus musculus (Mouse).